We begin with the raw amino-acid sequence, 447 residues long: Alkylglycerol monooxygenase (447 aa).

The next 2 membrane-spanning stretches (helical) occupy residues 43–63 (ATPF…ILKG) and 111–131 (WDSP…YYWF). The region spanning 118–249 (YLTFLGVDFG…LIIWDRIFGT (132 aa)) is the Fatty acid hydroxylase domain. Positions 132–136 (HRMAH) match the Histidine box-1 motif. Positions 145-149 (HQAHH) match the Histidine box-2 motif. Residues 170–190 (SWVFYCPLALFVPPSVFAVHI) traverse the membrane as a helical segment. The Histidine box-3 signature appears at 221–225 (HRVHH). 3 helical membrane-spanning segments follow: residues 334–354 (FLKI…EETF), 363–383 (VTIL…GFLL), and 413–433 (IESL…FWGV).

It belongs to the sterol desaturase family. TMEM195 subfamily. Requires Fe cation as cofactor.

Its subcellular location is the endoplasmic reticulum membrane. The catalysed reaction is 1-O-(1,2-saturated-alkyl)-sn-glycerol + (6R)-L-erythro-5,6,7,8-tetrahydrobiopterin + O2 = a 1-(1-hydroxyalkyl)-sn-glycerol + (6R)-L-erythro-6,7-dihydrobiopterin + H2O. In terms of biological role, glyceryl-ether monooxygenase that cleaves the O-alkyl bond of ether lipids. Ether lipids are essential components of brain membranes. The sequence is that of Alkylglycerol monooxygenase (Agmo) from Rattus norvegicus (Rat).